The following is a 122-amino-acid chain: Large ribosomal subunit protein bL12 (122 aa).

It belongs to the bacterial ribosomal protein bL12 family. In terms of assembly, homodimer. Part of the ribosomal stalk of the 50S ribosomal subunit. Forms a multimeric L10(L12)X complex, where L10 forms an elongated spine to which 2 to 4 L12 dimers bind in a sequential fashion. Binds GTP-bound translation factors.

Functionally, forms part of the ribosomal stalk which helps the ribosome interact with GTP-bound translation factors. Is thus essential for accurate translation. In Myxococcus xanthus (strain DK1622), this protein is Large ribosomal subunit protein bL12.